The chain runs to 230 residues: Uracil-DNA glycosylase (230 aa).

Asp-70 (proton acceptor) is an active-site residue.

Belongs to the uracil-DNA glycosylase (UDG) superfamily. UNG family.

Its subcellular location is the cytoplasm. The catalysed reaction is Hydrolyzes single-stranded DNA or mismatched double-stranded DNA and polynucleotides, releasing free uracil.. Functionally, excises uracil residues from the DNA which can arise as a result of misincorporation of dUMP residues by DNA polymerase or due to deamination of cytosine. This is Uracil-DNA glycosylase from Pseudomonas syringae pv. tomato (strain ATCC BAA-871 / DC3000).